We begin with the raw amino-acid sequence, 465 residues long: 23S rRNA (uracil(1939)-C(5))-methyltransferase RlmD (465 aa).

A disordered region spans residues 1–22; the sequence is MSEAVPTSARKSKNAPVAPGPA. A TRAM domain is found at 16-80; that stretch reads PVAPGPAPVL…PSYEQATVVD (65 aa). Positions 93, 99, 102, and 181 each coordinate [4Fe-4S] cluster. 6 residues coordinate S-adenosyl-L-methionine: Q289, F318, N323, E339, N367, and D388. C421 serves as the catalytic Nucleophile.

Belongs to the class I-like SAM-binding methyltransferase superfamily. RNA M5U methyltransferase family. RlmD subfamily.

It catalyses the reaction uridine(1939) in 23S rRNA + S-adenosyl-L-methionine = 5-methyluridine(1939) in 23S rRNA + S-adenosyl-L-homocysteine + H(+). Its function is as follows. Catalyzes the formation of 5-methyl-uridine at position 1939 (m5U1939) in 23S rRNA. In Burkholderia ambifaria (strain ATCC BAA-244 / DSM 16087 / CCUG 44356 / LMG 19182 / AMMD) (Burkholderia cepacia (strain AMMD)), this protein is 23S rRNA (uracil(1939)-C(5))-methyltransferase RlmD.